Reading from the N-terminus, the 1207-residue chain is DNA-directed RNA polymerase subunit beta' (1207 aa).

The Zn(2+) site is built by Cys60, Cys62, Cys75, and Cys78. Residues Asp449, Asp451, and Asp453 each coordinate Mg(2+). Zn(2+) contacts are provided by Cys822, Cys896, Cys903, and Cys906.

It belongs to the RNA polymerase beta' chain family. The RNAP catalytic core consists of 2 alpha, 1 beta, 1 beta' and 1 omega subunit. When a sigma factor is associated with the core the holoenzyme is formed, which can initiate transcription. Requires Mg(2+) as cofactor. Zn(2+) serves as cofactor.

The catalysed reaction is RNA(n) + a ribonucleoside 5'-triphosphate = RNA(n+1) + diphosphate. Functionally, DNA-dependent RNA polymerase catalyzes the transcription of DNA into RNA using the four ribonucleoside triphosphates as substrates. This Staphylococcus aureus (strain USA300) protein is DNA-directed RNA polymerase subunit beta'.